A 387-amino-acid chain; its full sequence is MKLLVLLVTLLVLSWTSAEDVGDQEILQQHNEDNNHKSELGEAAPQRTDNETSQLGQETPTIRVARAYEFSSKSNLEWVRWNGHIPSNAVKISNTYVGREDYVCRVGCEAGYYTPKKGPSCFYPYGFTEQHSKMFHILVNRDNFEILEWKWKTGGEVPENAVKACRDLYVAKNKYGLGKLHQSHHVFYLPWKGTEYKYNEYYVLNVNMDVVEQKITNVRYNMKGVEVHKDKPETLRSTSVKNYQCREATKQVTLEKSTETSQSWDVSNSITLGVSTEVSAGIPNIADVSVAVSAETSVEISHGTSKTESTSHSLSVSATIPPNSSCSITMEGCTFKANIPFTGRLTRKYSNGKVTSSSVKGIYKKVQVGEIQAVLHRCDKIADAKPC.

The first 18 residues, methionine 1–alanine 18, serve as a signal peptide directing secretion. The propeptide occupies glutamate 19–glutamine 46. Residues asparagine 31–leucine 40 are compositionally biased toward basic and acidic residues. The segment at asparagine 31–glutamine 57 is disordered.

Belongs to the natterin family. Contains 4 disulfide bonds. As to expression, expressed by the venom gland.

The protein localises to the secreted. Its activity is regulated as follows. Inhibited by tissue-kallikrein inhibitor TKI and trasylol. Plasma kallikrein inhibitor PKSI527 and classical inhibitors of serine-, metallo-, thiol- or aspartate-peptidases evokes a minor inhibition of the peptide digestion. Its function is as follows. Shows nociceptive, edema-inducing and kininogenase activity with release of kallidin from low molecular weight kininogen. The cleavage occurs at Met-Lys bonds. This chain is Natterin-4, found in Thalassophryne nattereri (Copper Joe toadfish).